The sequence spans 122 residues: uncharacterized protein (122 aa).

Positions 1 to 18 (MYSMAFLASSGLVANSSA) are cleaved as a signal peptide. Asparagine 15 is a glycosylation site (N-linked (GlcNAc...) asparagine).

This is an uncharacterized protein from Saccharomyces cerevisiae (strain ATCC 204508 / S288c) (Baker's yeast).